We begin with the raw amino-acid sequence, 698 residues long: MDFVRLARLFSRARPMGLFILQHLDPCRARWAGGREGLMRPVWAPFGSSSSQLPLGQERQENTGSLGSDPSHSNSTATQEEDEEESFGALSDKYSSRRLFRKSTAQFHNLRFGERRDEQTKPEPKLWRGQRNTPYWYFLQCKRLIKEGKLVEALDLFERQMLKEERLQPMESNYTALIGGCGRVGYLKKAFSLYNQMKKRDLEPSDATYTALFNVCAESPWKDSALQSALKLRQQLQAKNFELNLKTYHALLKMAAKCADLRMCLDVFKEIIHKGHVVTEETFSFLLMGCIQDKKTGFRYALQVWRLMLSLGLQPSRDSYNLLLVAARDCGLGDPQVASELLLKPREEATVLQPPVSRQQPRRTAQAKAGNLMSAMLHVEALERQLFLETSQALGPPEPPEARVPSKAQPEVDTKAEPSHTAALTPVALKPPPLELEVNLLTPGAVPPTVVSFGTVTTPADRLALVGGLEGFLSKMAEHRQQPDIRTLTLLAEVVESGSPAESLLLALLDEHQVEADLTFFNTLVRKKSKLGDLEGAKALLPVLAKRGLVPNLQTFCNLAIGCHRPKDGLQLLTDMKKSQVTPNSHIYSALINAAVRKLNYTYLINILKDMKQNRVPVNEVVIRQLEFAAQYPPTFDRYQGKNTYLEKIDGFRAYYKQWLTVMPAEETPHPWQKFRTKPQEDQDTRKEADDGCALGGR.

The tract at residues 49–88 (SSSQLPLGQERQENTGSLGSDPSHSNSTATQEEDEEESFG) is disordered. Residues 62–78 (NTGSLGSDPSHSNSTAT) show a composition bias toward polar residues. PPR repeat units follow at residues 133-169 (TPYW…RLQP), 170-204 (MESN…DLEP), 205-243 (SDAT…NFEL), 244-278 (NLKT…GHVV), 279-315 (TEET…GLQP), and 316-352 (SRDS…ATVL). The disordered stretch occupies residues 392–419 (QALGPPEPPEARVPSKAQPEVDTKAEPS). PPR repeat units lie at residues 517–551 (DLTF…GLVP), 552–583 (NLQT…QVTP), and 584–618 (NSHI…RVPV). Residues 670 to 698 (HPWQKFRTKPQEDQDTRKEADDGCALGGR) form a disordered region. Positions 678–690 (KPQEDQDTRKEAD) are enriched in basic and acidic residues.

Belongs to the PTCD1 family. As to quaternary structure, associates with mitochondrial leucine tRNAs. Interacts with ELAC2.

The protein localises to the mitochondrion. It is found in the mitochondrion matrix. Its function is as follows. Mitochondrial protein implicated in negative regulation of leucine tRNA levels, as well as negative regulation of mitochondria-encoded proteins and COX activity. Also affects the 3'-processing of mitochondrial tRNAs. This chain is Pentatricopeptide repeat-containing protein 1, mitochondrial (PTCD1), found in Pongo abelii (Sumatran orangutan).